The chain runs to 104 residues: Small ribosomal subunit protein uS10 (104 aa).

The protein belongs to the universal ribosomal protein uS10 family. In terms of assembly, part of the 30S ribosomal subunit.

Involved in the binding of tRNA to the ribosomes. This Thermoplasma acidophilum (strain ATCC 25905 / DSM 1728 / JCM 9062 / NBRC 15155 / AMRC-C165) protein is Small ribosomal subunit protein uS10.